A 1012-amino-acid polypeptide reads, in one-letter code: Cellulose synthase-like protein D5 (1012 aa).

The tract at residues 1–81 (MSVDYANYTV…ARVPAPSSNK (81 aa)) is disordered. Over residues 20–37 (PSGGAPPAAPSAGGARPG) the composition is skewed to low complexity. Residues 57-69 (GGGDDGAKMDRRL) are compositionally biased toward basic and acidic residues. Transmembrane regions (helical) follow at residues 150-170 (ILSPYRLLVLVRFVALFLFLV) and 180-200 (ALWLWGISIVCEFWFAFSWLL). Residue D280 is part of the active site. Residues 597-620 (PRQGSEAMPGAGGGRSGGGSVGGD) are disordered. Residues 606–618 (GAGGGRSGGGSVG) show a composition bias toward gly residues. Residue D717 is part of the active site. Helical transmembrane passes span 799-819 (LFLIMYCLLPALSLFSGQFIV), 825-845 (TFLSYLLLITITLMLLCLLEV), 871-891 (LAAVLQGLLKVVAGIEISFTL), 914-934 (SLFIPPLAVIGINIIALVVGV), 948-968 (LLGGGFFSFWVLAHYYPFAKG), and 978-998 (TIVYVWAGLISITVSLLWITI).

Belongs to the glycosyltransferase 2 family. Plant cellulose synthase-like D subfamily.

Its subcellular location is the golgi apparatus membrane. In terms of biological role, thought to be a Golgi-localized beta-glycan synthase that polymerize the backbones of noncellulosic polysaccharides (hemicelluloses) of plant cell wall. This is Cellulose synthase-like protein D5 (CSLD5) from Oryza sativa subsp. japonica (Rice).